The chain runs to 1325 residues: Nephrocystin-3 (1325 aa).

A disordered region spans residues 1–20 (MGTASSLVSPTGGEVIEDTY). Glycine 2 carries N-myristoyl glycine lipidation. Residues 107–203 (SMGRREAKLD…QRLQAQGIQV (97 aa)) are a coiled coil. 11 TPR repeats span residues 467–500 (TPEE…AHEL), 881–914 (CLLN…KGAM), 916–937 (TEYF…MLCL), 938–971 (ADLY…RETA), 980–1013 (AQSL…SENA), 1022–1055 (AREL…RQQA), 1088–1121 (ARTL…RERV), 1130–1163 (AQSL…RRRA), 1172–1205 (AYTV…RQKS), 1214–1247 (ATAL…YEDS), and 1256–1289 (GETL…KEAE). The interval 1293–1325 (LGGKAPSRQSSSGDTFLFKTTHSPNVFLPQGQS) is disordered. Polar residues predominate over residues 1299 to 1325 (SRQSSSGDTFLFKTTHSPNVFLPQGQS).

As to quaternary structure, interacts with NPHP1 and INVS/NPHP2. Interacts (when myristoylated) with UNC119 and UNC119B; interaction is required for localization to cilium. Interacts with CEP164. Component of a complex containing at least ANKS6, INVS, NEK8 and NPHP3. ANKS6 may organize complex assembly by linking INVS and NPHP3 to NEK8 and INVS may target the complex to the proximal ciliary axoneme.

It localises to the cell projection. It is found in the cilium. Its function is as follows. Required for normal ciliary development and function. Inhibits disheveled-1-induced canonical Wnt-signaling activity and may also play a role in the control of non-canonical Wnt signaling that regulates planar cell polarity. Probably acts as a molecular switch between different Wnt signaling pathways. Required for proper convergent extension cell movements. This is Nephrocystin-3 (Nphp3) from Mus musculus (Mouse).